The chain runs to 161 residues: Xanthine-guanine phosphoribosyltransferase (161 aa).

5-phospho-alpha-D-ribose 1-diphosphate is bound by residues Arg-41–Gly-42 and Asp-95–Thr-103. Asp-96 contributes to the Mg(2+) binding site. Guanine is bound by residues Asp-99 and Ile-142. Asp-99 and Ile-142 together coordinate xanthine. GMP-binding positions include Asp-99–Thr-103 and Trp-141–Ile-142.

This sequence belongs to the purine/pyrimidine phosphoribosyltransferase family. XGPT subfamily. Homotetramer. It depends on Mg(2+) as a cofactor.

It is found in the cell inner membrane. The catalysed reaction is GMP + diphosphate = guanine + 5-phospho-alpha-D-ribose 1-diphosphate. The enzyme catalyses XMP + diphosphate = xanthine + 5-phospho-alpha-D-ribose 1-diphosphate. It carries out the reaction IMP + diphosphate = hypoxanthine + 5-phospho-alpha-D-ribose 1-diphosphate. The protein operates within purine metabolism; GMP biosynthesis via salvage pathway; GMP from guanine: step 1/1. It participates in purine metabolism; XMP biosynthesis via salvage pathway; XMP from xanthine: step 1/1. Its function is as follows. Purine salvage pathway enzyme that catalyzes the transfer of the ribosyl-5-phosphate group from 5-phospho-alpha-D-ribose 1-diphosphate (PRPP) to the N9 position of the 6-oxopurines guanine and xanthine to form the corresponding ribonucleotides GMP (guanosine 5'-monophosphate) and XMP (xanthosine 5'-monophosphate), with the release of PPi. To a lesser extent, also acts on hypoxanthine. The sequence is that of Xanthine-guanine phosphoribosyltransferase from Idiomarina loihiensis (strain ATCC BAA-735 / DSM 15497 / L2-TR).